The primary structure comprises 141 residues: Hemoglobin subunit alpha-D (141 aa).

The region spanning 1-141 (MLTAEDKKLI…VAAVLAEKYR (141 aa)) is the Globin domain. The heme b site is built by H58 and H87.

Heterotetramer of two alpha-D chains and two beta chains. In terms of tissue distribution, red blood cells.

Its function is as follows. Involved in oxygen transport from the lung to the various peripheral tissues. The protein is Hemoglobin subunit alpha-D (HBAD) of Aythya fuligula (Tufted duck).